Here is a 211-residue protein sequence, read N- to C-terminus: Thymidylate kinase (211 aa).

10 to 17 (GIDGSGKT) provides a ligand contact to ATP.

It belongs to the thymidylate kinase family.

The catalysed reaction is dTMP + ATP = dTDP + ADP. In terms of biological role, phosphorylation of dTMP to form dTDP in both de novo and salvage pathways of dTTP synthesis. The polypeptide is Thymidylate kinase (Prochlorococcus marinus (strain NATL1A)).